Here is a 165-residue protein sequence, read N- to C-terminus: UPF0669 protein v1g209471 (165 aa).

A signal peptide spans methionine 1–cysteine 23. A glycan (N-linked (GlcNAc...) asparagine) is linked at asparagine 38.

The protein belongs to the UPF0669 family.

It is found in the secreted. The protein is UPF0669 protein v1g209471 of Nematostella vectensis (Starlet sea anemone).